The primary structure comprises 404 residues: Glucose-1-phosphate adenylyltransferase (404 aa).

Alpha-D-glucose 1-phosphate contacts are provided by residues Tyr99, Gly164, 179–180 (EK), and Ser197.

It belongs to the bacterial/plant glucose-1-phosphate adenylyltransferase family.

The enzyme catalyses alpha-D-glucose 1-phosphate + ATP + H(+) = ADP-alpha-D-glucose + diphosphate. Its pathway is glycan biosynthesis; glycogen biosynthesis. Its function is as follows. Involved in the biosynthesis of ADP-glucose, a building block, required in the biosynthesis of maltose-1-phosphate (M1P) and in the elongation reactions to produce linear alpha-1,4-glucans. Catalyzes the reaction between ATP and alpha-D-glucose 1-phosphate (G1P) to produce pyrophosphate and ADP-Glc. The protein is Glucose-1-phosphate adenylyltransferase of Mycolicibacterium vanbaalenii (strain DSM 7251 / JCM 13017 / BCRC 16820 / KCTC 9966 / NRRL B-24157 / PYR-1) (Mycobacterium vanbaalenii).